Consider the following 139-residue polypeptide: Holo-[acyl-carrier-protein] synthase (139 aa).

The Mg(2+) site is built by Asp-8 and Glu-61.

This sequence belongs to the P-Pant transferase superfamily. AcpS family. It depends on Mg(2+) as a cofactor.

The protein resides in the cytoplasm. It catalyses the reaction apo-[ACP] + CoA = holo-[ACP] + adenosine 3',5'-bisphosphate + H(+). Functionally, transfers the 4'-phosphopantetheine moiety from coenzyme A to a Ser of acyl-carrier-protein. This chain is Holo-[acyl-carrier-protein] synthase, found in Nitrobacter hamburgensis (strain DSM 10229 / NCIMB 13809 / X14).